The following is a 378-amino-acid chain: Putative gustatory receptor 22f (378 aa).

The Cytoplasmic segment spans residues 1–13 (MKMFQPRRGFSCH). A helical membrane pass occupies residues 14–34 (LAWFMLQTTLYASWLLGLFPF). Over 35-48 (TFDSRRKQLKRSRW) the chain is Extracellular. The chain crosses the membrane as a helical span at residues 49–69 (LLLYGFVLHSLAMCLAMSSHL). Topologically, residues 70-88 (ASKQRRKYNAFERNPLLEK) are cytoplasmic. Residues 89 to 109 (IYMQFQVTTFFTISVLLLMNV) form a helical membrane-spanning segment. Over 110 to 143 (WKSNTVRKIANELLTLEGQVKDLLTLKNCPNFNC) the chain is Extracellular. A helical transmembrane segment spans residues 144-164 (FVIKKHVAAIGQFVISIYFCL). Topologically, residues 165-178 (CQENSYPKILKILC) are cytoplasmic. The chain crosses the membrane as a helical span at residues 179-199 (CLPSVGLQLIIMHFHTEIILV). The Extracellular portion of the chain corresponds to 200-245 (YRYVWLVNETLEDSHHLSSSRIHALASLYDRLLKLSELVVACNDLQ). Asparagine 207 is a glycosylation site (N-linked (GlcNAc...) asparagine). A helical transmembrane segment spans residues 246–266 (LILMLIIYLIGNTVQIFFLIV). The Cytoplasmic segment spans residues 267 to 354 (LGVSMNKRYI…LCGLFSINHN (88 aa)). A helical transmembrane segment spans residues 355 to 375 (MGFQMIITSFLYLVYLLQFDF). Residues 376–378 (MNL) are Extracellular-facing.

This sequence belongs to the insect chemoreceptor superfamily. Gustatory receptor (GR) family. Gr22e subfamily. As to expression, taste bristles in the foreleg and labial palps.

Its subcellular location is the cell membrane. Probable gustatory receptor which mediates acceptance or avoidance behavior, depending on its substrates. This chain is Putative gustatory receptor 22f (Gr22f), found in Drosophila melanogaster (Fruit fly).